We begin with the raw amino-acid sequence, 437 residues long: Aspartic proteinase CDR1 (437 aa).

An N-terminal signal peptide occupies residues 1–25; that stretch reads MASLFSSVLLSLCLLSSLFLSNANA. The propeptide at 26–73 is activation peptide; sequence KPKLGFTADLIHRDSPKSPFYNPMETSSQRLRNAIHRSVNRVFHFTEK. One can recognise a Peptidase A1 domain in the interval 90 to 430; that stretch reads YLMNVSIGTP…DTVSKTVSFK (341 aa). An N-linked (GlcNAc...) asparagine glycan is attached at Asn93. Active-site residues include Asp108 and Asp319.

It belongs to the peptidase A1 family.

The protein resides in the secreted. It is found in the extracellular space. The protein localises to the apoplast. Involved in salicylic acid-dependent inducible resistance responses. May release an endogenous peptide elicitor required for the activation of inducible resistance mechanisms. Possesses protease activity in vitro. The protein is Aspartic proteinase CDR1 (CDR1) of Arabidopsis thaliana (Mouse-ear cress).